A 682-amino-acid polypeptide reads, in one-letter code: E3 ubiquitin-protein ligase RNF103 (682 aa).

Transmembrane regions (helical) follow at residues 6 to 26 (FFLL…EAIV), 326 to 346 (LFVL…FITQ), 366 to 386 (LLII…LDSF), and 411 to 431 (MFYS…GLLI). The span at 525–542 (EEMSESSQDTENDSDSDN) shows a compositional bias: acidic residues. Residues 525–549 (EEMSESSQDTENDSDSDNTDTFSSS) form a disordered region. An RING-type zinc finger spans residues 618-660 (CVVCLENFENGCLLMGLPCGHVFHQNCIVMWLAGGRHCCPVCR).

In terms of assembly, interacts with DERL1 and VCP. As to expression, expressed in different tissues including hippocampus, cerebral cortex, heart, kidney, spleen and lung. Expression is increased in hippocampus and frontal cortex after chronic treatment with antidepressants.

Its subcellular location is the endoplasmic reticulum membrane. It catalyses the reaction S-ubiquitinyl-[E2 ubiquitin-conjugating enzyme]-L-cysteine + [acceptor protein]-L-lysine = [E2 ubiquitin-conjugating enzyme]-L-cysteine + N(6)-ubiquitinyl-[acceptor protein]-L-lysine.. Its pathway is protein modification; protein ubiquitination. Functionally, acts as an E2-dependent E3 ubiquitin-protein ligase, probably involved in the ER-associated protein degradation pathway. This is E3 ubiquitin-protein ligase RNF103 (Rnf103) from Rattus norvegicus (Rat).